A 385-amino-acid polypeptide reads, in one-letter code: Phospho-N-acetylmuramoyl-pentapeptide-transferase (385 aa).

10 consecutive transmembrane segments (helical) span residues 23-43, 79-99, 103-123, 135-155, 186-206, 218-238, 258-278, 282-302, 307-327, and 362-382; these read FITV…LGAG, MGGI…GAVA, VWLS…DDYV, AWYK…VLYF, LGVD…VTAV, GLTT…VYVS, LTVF…YNGY, VFMG…TILM, LLLP…IVQT, and KIVT…LLIL.

This sequence belongs to the glycosyltransferase 4 family. MraY subfamily. The cofactor is Mg(2+).

The protein localises to the cell inner membrane. It catalyses the reaction UDP-N-acetyl-alpha-D-muramoyl-L-alanyl-gamma-D-glutamyl-meso-2,6-diaminopimeloyl-D-alanyl-D-alanine + di-trans,octa-cis-undecaprenyl phosphate = di-trans,octa-cis-undecaprenyl diphospho-N-acetyl-alpha-D-muramoyl-L-alanyl-D-glutamyl-meso-2,6-diaminopimeloyl-D-alanyl-D-alanine + UMP. It functions in the pathway cell wall biogenesis; peptidoglycan biosynthesis. Catalyzes the initial step of the lipid cycle reactions in the biosynthesis of the cell wall peptidoglycan: transfers peptidoglycan precursor phospho-MurNAc-pentapeptide from UDP-MurNAc-pentapeptide onto the lipid carrier undecaprenyl phosphate, yielding undecaprenyl-pyrophosphoryl-MurNAc-pentapeptide, known as lipid I. This is Phospho-N-acetylmuramoyl-pentapeptide-transferase from Salinibacter ruber (strain DSM 13855 / M31).